A 320-amino-acid chain; its full sequence is Peroxidase 66 (320 aa).

The N-terminal stretch at methionine 1–alanine 29 is a signal peptide. Pyrrolidone carboxylic acid is present on glutamine 30. 4 cysteine pairs are disulfide-bonded: cysteine 40/cysteine 118, cysteine 73/cysteine 78, cysteine 124/cysteine 315, and cysteine 202/cysteine 227. Residue histidine 71 is the Proton acceptor of the active site. Aspartate 72, valine 75, glycine 77, aspartate 79, and serine 81 together coordinate Ca(2+). Asparagine 85 and asparagine 96 each carry an N-linked (GlcNAc...) asparagine glycan. Residue proline 165 participates in substrate binding. Heme b is bound at residue histidine 195. Threonine 196 serves as a coordination point for Ca(2+). N-linked (GlcNAc...) asparagine glycosylation occurs at asparagine 211. Residues aspartate 239, threonine 242, and aspartate 247 each contribute to the Ca(2+) site.

Belongs to the peroxidase family. Classical plant (class III) peroxidase subfamily. Requires heme b as cofactor. It depends on Ca(2+) as a cofactor.

The protein localises to the secreted. The catalysed reaction is 2 a phenolic donor + H2O2 = 2 a phenolic radical donor + 2 H2O. Functionally, removal of H(2)O(2), oxidation of toxic reductants, biosynthesis and degradation of lignin, suberization, auxin catabolism, response to environmental stresses such as wounding, pathogen attack and oxidative stress. These functions might be dependent on each isozyme/isoform in each plant tissue. This is Peroxidase 66 (PER66) from Zea mays (Maize).